The primary structure comprises 364 residues: Pyrimidine monooxygenase RutA (364 aa).

FMN-binding positions include 49-50 (IK), Asn115, Glu124, 140-141 (RY), and Ser190.

Belongs to the NtaA/SnaA/DszA monooxygenase family. RutA subfamily.

The catalysed reaction is uracil + FMNH2 + NADH + O2 = (Z)-3-ureidoacrylate + FMN + NAD(+) + H2O + H(+). The enzyme catalyses thymine + FMNH2 + NADH + O2 = (Z)-2-methylureidoacrylate + FMN + NAD(+) + H2O + H(+). In terms of biological role, catalyzes the pyrimidine ring opening between N-3 and C-4 by an unusual flavin hydroperoxide-catalyzed mechanism, adding oxygen atoms in the process to yield ureidoacrylate peracid, that immediately reacts with FMN forming ureidoacrylate and FMN-N(5)-oxide. The FMN-N(5)-oxide reacts spontaneously with NADH to produce FMN. Requires the flavin reductase RutF to regenerate FMN in vivo. This chain is Pyrimidine monooxygenase RutA, found in Methylorubrum extorquens (strain ATCC 14718 / DSM 1338 / JCM 2805 / NCIMB 9133 / AM1) (Methylobacterium extorquens).